The primary structure comprises 296 residues: Probable endonuclease 4 (296 aa).

Zn(2+) is bound by residues His-68, His-109, Glu-144, Asp-178, His-181, His-213, Asp-226, His-228, and Glu-258.

Belongs to the AP endonuclease 2 family. Zn(2+) is required as a cofactor.

It carries out the reaction Endonucleolytic cleavage to 5'-phosphooligonucleotide end-products.. Its function is as follows. Endonuclease IV plays a role in DNA repair. It cleaves phosphodiester bonds at apurinic or apyrimidinic (AP) sites, generating a 3'-hydroxyl group and a 5'-terminal sugar phosphate. In Staphylococcus aureus (strain NCTC 8325 / PS 47), this protein is Probable endonuclease 4.